Here is a 128-residue protein sequence, read N- to C-terminus: Protein Wnt-10 (128 aa).

Cystine bridges form between Cys3–Cys17, Cys5–Cys12, Cys74–Cys105, Cys90–Cys100, and Cys127–Cys128. Ser9 is lipidated: O-palmitoleoyl serine; by PORCN. The N-linked (GlcNAc...) asparagine glycan is linked to Asn91.

Belongs to the Wnt family. Post-translationally, palmitoleoylation is required for efficient binding to frizzled receptors. Depalmitoleoylation leads to Wnt signaling pathway inhibition. As to expression, in embryo, in dorsal hindbrain; in adults, in brain.

It is found in the secreted. It localises to the extracellular space. The protein localises to the extracellular matrix. Functionally, ligand for members of the frizzled family of seven transmembrane receptors. Probable developmental protein. May be a signaling molecule which affects the development of discrete regions of tissues. Is likely to signal over only few cell diameters. The chain is Protein Wnt-10 (wnt10) from Xenopus laevis (African clawed frog).